The chain runs to 561 residues: Putative transport protein DNO_0009 (561 aa).

The next 5 membrane-spanning stretches (helical) occupy residues 4–24, 29–49, 74–94, 104–124, and 166–186; these read VAIT…LGNI, VGLS…IMNL, FGLI…FFAS, AFAA…YYLF, and MGYA…MWLI. RCK C-terminal domains lie at 198 to 283 and 285 to 369; these read LQFF…ILGE and AGHE…LIGN. 6 consecutive transmembrane segments (helical) span residues 379-399, 411-433, 447-467, 472-492, 501-521, and 538-558; these read MLPV…PIYL, AGGP…LYWF, IVLF…STLL, FSWI…AGII, YLTI…LAFA, and VYPL…VLLW.

This sequence belongs to the AAE transporter (TC 2.A.81) family. YidE subfamily.

It localises to the cell membrane. This is Putative transport protein DNO_0009 from Dichelobacter nodosus (strain VCS1703A).